We begin with the raw amino-acid sequence, 601 residues long: DDB1- and CUL4-associated factor 8 (601 aa).

Polar residues-rich tracts occupy residues 1–24 (MSFS…SSPE) and 46–60 (VSLS…TTQA). A disordered region spans residues 1–150 (MSFSGEMSNG…DWLISEKTPL (150 aa)). The Nuclear export signal motif lies at 39-50 (IEVEASDVSLSL). Over residues 61–99 (ESRDSCSETSGEDKDSDSMDDTGHYSINDENRGNDQSHS) the composition is skewed to basic and acidic residues. A coiled-coil region spans residues 94–131 (NDQSHSEDEEEEEEEDEEEEAVRHRKRAQRKRANRDQE). Over residues 100–113 (EDEEEEEEEDEEEE) the composition is skewed to acidic residues. Over residues 116–126 (RHRKRAQRKRA) the composition is skewed to basic residues. A compositionally biased stretch (basic and acidic residues) spans 127–140 (NRDQESSDEERALD). WD repeat units lie at residues 194-233 (GHSG…PVLE), 237-278 (GHKS…CCKN), 284-324 (QHKG…PASR), 332-372 (ESKV…ENVN), 388-427 (EAKA…GAEY), 435-475 (RNNA…IVQF), and 479-519 (DKGG…TELD). Residues 561 to 601 (RRRRRDAGLGAGDAESDDSPSSSDSSDDDEDGPDRVQCIPS) are disordered.

It belongs to the WD repeat DCAF8 family.

It localises to the nucleus. The protein resides in the cytoplasm. This is DDB1- and CUL4-associated factor 8 (dcaf8) from Xenopus laevis (African clawed frog).